A 255-amino-acid polypeptide reads, in one-letter code: NAD-dependent protein deacylase (255 aa).

Positions 1–253 (MIEEAPRIIA…VKVKRCLENK (253 aa)) constitute a Deacetylase sirtuin-type domain. NAD(+) is bound at residue 20 to 39 (GAGVSAESGIPTFRDRGGLW). Y64 and R67 together coordinate substrate. Residue 98–101 (QNID) participates in NAD(+) binding. H116 acts as the Proton acceptor in catalysis. 4 residues coordinate Zn(2+): C124, C127, C151, and C154. NAD(+) contacts are provided by residues 191–193 (GTS), 217–219 (NTK), and A235.

The protein belongs to the sirtuin family. Class III subfamily. Zn(2+) serves as cofactor.

Its subcellular location is the cytoplasm. The catalysed reaction is N(6)-acetyl-L-lysyl-[protein] + NAD(+) + H2O = 2''-O-acetyl-ADP-D-ribose + nicotinamide + L-lysyl-[protein]. The enzyme catalyses N(6)-succinyl-L-lysyl-[protein] + NAD(+) + H2O = 2''-O-succinyl-ADP-D-ribose + nicotinamide + L-lysyl-[protein]. Its function is as follows. NAD-dependent lysine deacetylase and desuccinylase that specifically removes acetyl and succinyl groups on target proteins. Modulates the activities of several proteins which are inactive in their acylated form. Deacetylates the N-terminal lysine residue of Alba, the major archaeal chromatin protein and that, in turn, increases Alba's DNA binding affinity, thereby repressing transcription. This is NAD-dependent protein deacylase from Thermococcus sibiricus (strain DSM 12597 / MM 739).